Here is a 218-residue protein sequence, read N- to C-terminus: UPF0758 protein SAUSA300_1608 (218 aa).

One can recognise an MPN domain in the interval 92–214; sequence KITQPSDVAD…FTSLVEAGYF (123 aa). Zn(2+) is bound by residues His-163, His-165, and Asp-176. Positions 163–176 match the JAMM motif motif; it reads HNHPSGDVTPSQED.

The protein belongs to the UPF0758 family.

This is UPF0758 protein SAUSA300_1608 from Staphylococcus aureus (strain USA300).